Reading from the N-terminus, the 480-residue chain is Phenolic acid decarboxylase (480 aa).

Mn(2+) contacts are provided by Asn-163, His-185, and Glu-227. Prenylated FMN is bound by residues 163–168 (NVGTYR) and 184–185 (MH). Catalysis depends on Glu-278, which acts as the Proton donor. Positions 443–466 (TTPVPPEPNPRETQLLDPPDGTEE) are disordered.

The protein belongs to the UbiD family. YclC subfamily. As to quaternary structure, homohexamer. It depends on prenylated FMN as a cofactor. Mn(2+) is required as a cofactor.

The enzyme catalyses 4-hydroxybenzoate + H(+) = phenol + CO2. The catalysed reaction is 3,4-dihydroxybenzoate + H(+) = catechol + CO2. With respect to regulation, inhibited by Zn(2+), (2,3,4)-trihydroxybenzoate and (3,4,5)-trihydroxybenzoate. Ammonium and rubidium ions decrease the activity of the carboxylation of 3,4-dihydroxybenzoate by about 20%. Functionally, involved in the non-oxidative decarboxylation and detoxification of phenolic derivatives under anaerobic conditions. Oxygen-sensitive phenolic acid decarboxylase that catalyzes the reversible decarboxylation of 4-hydroxybenzoate and 3,4-dihydroxybenzoate. The protein is Phenolic acid decarboxylase of Sedimentibacter hydroxybenzoicus (Clostridium hydroxybenzoicum).